A 131-amino-acid chain; its full sequence is Small ribosomal subunit protein uS8 (131 aa).

The protein belongs to the universal ribosomal protein uS8 family. In terms of assembly, part of the 30S ribosomal subunit. Contacts proteins S5 and S12.

In terms of biological role, one of the primary rRNA binding proteins, it binds directly to 16S rRNA central domain where it helps coordinate assembly of the platform of the 30S subunit. The sequence is that of Small ribosomal subunit protein uS8 from Wolinella succinogenes (strain ATCC 29543 / DSM 1740 / CCUG 13145 / JCM 31913 / LMG 7466 / NCTC 11488 / FDC 602W) (Vibrio succinogenes).